The following is a 510-amino-acid chain: ATP synthase subunit alpha (510 aa).

Position 170–177 (170–177) interacts with ATP; the sequence is GDRQTGKT.

It belongs to the ATPase alpha/beta chains family. F-type ATPases have 2 components, CF(1) - the catalytic core - and CF(0) - the membrane proton channel. CF(1) has five subunits: alpha(3), beta(3), gamma(1), delta(1), epsilon(1). CF(0) has three main subunits: a(1), b(2) and c(9-12). The alpha and beta chains form an alternating ring which encloses part of the gamma chain. CF(1) is attached to CF(0) by a central stalk formed by the gamma and epsilon chains, while a peripheral stalk is formed by the delta and b chains.

It localises to the cell inner membrane. It catalyses the reaction ATP + H2O + 4 H(+)(in) = ADP + phosphate + 5 H(+)(out). Functionally, produces ATP from ADP in the presence of a proton gradient across the membrane. The alpha chain is a regulatory subunit. This is ATP synthase subunit alpha from Caulobacter sp. (strain K31).